The chain runs to 1267 residues: Probable ATP-dependent RNA helicase DHR1 (1267 aa).

Disordered stretches follow at residues 1-67 (MGTY…EPLT), 168-233 (YEPK…SNIK), and 255-313 (EELK…DQND). Basic and acidic residues-rich tracts occupy residues 7–25 (RFNEKARSGHMAKLKELKR) and 32–43 (TRQDENDERVEN). The span at 175–192 (EYGEGGSSEDDDGEDDFE) shows a compositional bias: acidic residues. A Phosphoserine modification is found at Ser181. Residues 202 to 217 (TDNEEKKSSGFIDHRP) show a composition bias toward basic and acidic residues. Positions 264-284 (DEMDFDTTSEDDDEEEDQEEE) are enriched in acidic residues. The Helicase ATP-binding domain occupies 401–580 (MEAIHHNDVV…KTLFPIAPPV (180 aa)). Residue 414–421 (GETGSGKT) coordinates ATP. The short motif at 516–519 (DEAH) is the DEAH box element. Residues 675 to 858 (DIDFSVQVID…SIVLQMKSMA (184 aa)) enclose the Helicase C-terminal domain. Disordered stretches follow at residues 693–720 (RYEEDEGNSGNGEDEEDEEEEGFEEVLT) and 955–976 (PNPDENLDDKIREHDESTPGMD). The span at 695 to 719 (EEDEGNSGNGEDEEDEEEEGFEEVL) shows a compositional bias: acidic residues.

It belongs to the DEAD box helicase family. DEAH subfamily. In terms of assembly, interacts with snoRNA U3. Component of the ribosomal small subunit (SSU) processome composed of at least 40 protein subunits and snoRNA U3.

The protein localises to the nucleus. The protein resides in the nucleolus. It catalyses the reaction ATP + H2O = ADP + phosphate + H(+). Its function is as follows. Probable ATP-binding RNA helicase. Required for 18S rRNA synthesis. May play a role in restructuring of the pre-rRNA. This is Probable ATP-dependent RNA helicase DHR1 (ECM16) from Saccharomyces cerevisiae (strain ATCC 204508 / S288c) (Baker's yeast).